The sequence spans 148 residues: Phosphoribosyl-AMP cyclohydrolase (148 aa).

Mg(2+) is bound at residue D91. C92 provides a ligand contact to Zn(2+). Residues D93 and D95 each contribute to the Mg(2+) site. Zn(2+)-binding residues include C109 and C116.

Belongs to the PRA-CH family. As to quaternary structure, homodimer. Requires Mg(2+) as cofactor. Zn(2+) is required as a cofactor.

It localises to the cytoplasm. The catalysed reaction is 1-(5-phospho-beta-D-ribosyl)-5'-AMP + H2O = 1-(5-phospho-beta-D-ribosyl)-5-[(5-phospho-beta-D-ribosylamino)methylideneamino]imidazole-4-carboxamide. It functions in the pathway amino-acid biosynthesis; L-histidine biosynthesis; L-histidine from 5-phospho-alpha-D-ribose 1-diphosphate: step 3/9. Its function is as follows. Catalyzes the hydrolysis of the adenine ring of phosphoribosyl-AMP. This Rhodopseudomonas palustris (strain HaA2) protein is Phosphoribosyl-AMP cyclohydrolase.